Reading from the N-terminus, the 507-residue chain is Phosphoprotein (507 aa).

The tract at residues 1–48 (MAEEQARHVKNGLECIRALKAEPIGSLAIEEAMAAWSEISDNPGQERA) is interaction with N0. 4 disordered regions span residues 41-99 (DNPG…PPRN), 134-163 (GLDG…TEGY), 201-231 (NNFP…IKKG), and 250-273 (GATQ…GNVP). Phosphoserine is present on Ser-86. Residues 134–145 (GLDGDSTLSGGD) show a composition bias toward low complexity. Positions 146–160 (NESENSDVDIGEPDT) are enriched in acidic residues. Ser-151 is subject to Phosphoserine. Positions 260–270 (SEPSGPGAPAG) are enriched in low complexity. A multimerization region spans residues 304–376 (GDYYDDELFS…LSSIMIAIPG (73 aa)). 2 interaction with the L polymerase regions span residues 361–377 (STLE…IPGL) and 396–410 (PIIG…AEVL). The x domain (XD) stretch occupies residues 457–507 (GPASRSVIRSIIKSSRLEEDRKRYLMTLLDDIKGANDLAKFHQMLMKIIMK). Residues 459–507 (ASRSVIRSIIKSSRLEEDRKRYLMTLLDDIKGANDLAKFHQMLMKIIMK) are interaction with the nucleocapsid (N-RNA).

The protein belongs to the morbillivirus P protein family. In terms of assembly, homotetramer. Interacts (via multimerization domain and XD domain) with polymerase L; this interaction forms the polymerase L-P complex. Interacts (via N-terminus) with N0 (via Ncore); this interaction allows P to chaperon N0 to avoid N polymerization and non-specific RNA binding before encapsidation. Interacts (via C-terminus) with N-RNA template (via Ntail); this interaction maintains the P/L complex anchored to the nucleocapsid template during the sequential transcription. Interacts (via C-terminus) with protein C this interaction allows C to associate with the ribonucleocapsid. Phosphorylation on serines by host CK2 is necessary for the formation of viral factories.

Its function is as follows. Essential cofactor of the RNA polymerase L that plays a central role in the transcription and replication by forming the polymerase complex with RNA polymerase L and recruiting L to the genomic N-RNA template for RNA synthesis. Also plays a central role in the encapsidation of nascent RNA chains by forming the encapsidation complex with the nucleocapsid protein N (N-P complex). Acts as a chaperone for newly synthesized free N protein, so-called N0, allowing encapsidation of nascent RNA chains during replication. The nucleoprotein protein N prevents excessive phosphorylation of P, which leads to down-regulation of viral transcription/ replication. Participates, together with N, in the formation of viral factories (viroplasms), which are large inclusions in the host cytoplasm where replication takes place. This chain is Phosphoprotein (P/V), found in Measles virus (strain Edmonston) (MeV).